The primary structure comprises 915 residues: DNA (cytosine-5)-methyltransferase 3 (915 aa).

Residues 1–14 are compositionally biased toward low complexity; it reads MAPSSPSSARPTRA. Disordered stretches follow at residues 1–107 and 152–171; these read MAPS…AEEQ and HSNW…PEED. The span at 21–30 shows a compositional bias: basic and acidic residues; that stretch reads AMAEEIHQNQ. Residues 42 to 57 are compositionally biased toward basic residues; the sequence is AKRRRKAASSGKKPKP. Positions 71-80 are enriched in basic and acidic residues; the sequence is KKGETEKTEP. Acidic residues predominate over residues 81-107; the sequence is VVDDVCAEEPDEEELAMGEEEAEAEEQ. Residues 188-313 enclose the BAH domain; it reads IVYCLGDDVY…VAYSTFANIS (126 aa). The segment covering 315 to 328 has biased composition (polar residues); that stretch reads ENGQSGSETASGIS. The disordered stretch occupies residues 315 to 338; it reads ENGQSGSETASGISSDDAGLETSS. One can recognise an SAM-dependent MTase C5-type domain in the interval 345 to 876; it reads ATLLDLYSGC…YCLGQAYLGE (532 aa). Residues 445–508 form the Chromo domain; the sequence is FVVQKLIGIR…EGRKRKILPL (64 aa). C521 is a catalytic residue.

This sequence belongs to the class I-like SAM-binding methyltransferase superfamily. C5-methyltransferase family.

Its subcellular location is the nucleus. The catalysed reaction is a 2'-deoxycytidine in DNA + S-adenosyl-L-methionine = a 5-methyl-2'-deoxycytidine in DNA + S-adenosyl-L-homocysteine + H(+). In terms of biological role, may be involved in the CpXpG methylation and in gene silencing. The chain is DNA (cytosine-5)-methyltransferase 3 (DMT105) from Zea mays (Maize).